The following is a 113-amino-acid chain: Putative pterin-4-alpha-carbinolamine dehydratase (113 aa).

The protein belongs to the pterin-4-alpha-carbinolamine dehydratase family.

The catalysed reaction is (4aS,6R)-4a-hydroxy-L-erythro-5,6,7,8-tetrahydrobiopterin = (6R)-L-erythro-6,7-dihydrobiopterin + H2O. The protein is Putative pterin-4-alpha-carbinolamine dehydratase of Nitrosomonas europaea (strain ATCC 19718 / CIP 103999 / KCTC 2705 / NBRC 14298).